An 827-amino-acid chain; its full sequence is Stage II sporulation protein E (827 aa).

A run of 10 helical transmembrane segments spans residues 49-69, 71-91, 116-136, 142-162, 175-195, 206-226, 247-267, 269-289, 299-319, and 320-340; these read IGFLLGRAFILSEVLPFALPF, GAMLLIRRDKAFYAVLAVLAG, VAAFITDDRVKALPIVVFFSM, GFVYAQNGVFTTYDYVMAIVE, QSLPIFTVKKVKQSLKIEEII, TGLAGLSYQGMQAEHILARYV, GLILGLANIGNLYQMSLLAFS, LLGGLLKEGKKAGAAIGLIVG, GSAGLMTTLYESLIAVCLFLL, and TPQSITRKVARYIPGTVEHLQ. Over 341 to 827 the chain is Cytoplasmic; sequence EQQQYARKIR…AIFQNKQEIS (487 aa). One can recognise a PPM-type phosphatase domain in the interval 594 to 804; sequence STGAAHAAKG…DDMTVVVVRI (211 aa).

Mn(2+) serves as cofactor.

It localises to the cell membrane. The enzyme catalyses O-phospho-L-seryl-[protein] + H2O = L-seryl-[protein] + phosphate. It catalyses the reaction O-phospho-L-threonyl-[protein] + H2O = L-threonyl-[protein] + phosphate. Its function is as follows. Normally needed for pro-sigma E processing during sporulation but can be bypassed in vegetative cells. Activates SpoIIAA by dephosphorylation. In Bacillus subtilis (strain 168), this protein is Stage II sporulation protein E (spoIIE).